The chain runs to 298 residues: MAVILDGKQVAHFLRQSLAEQVQTLAKEGKPIPHLAIVLVGDDPASHTYVYNKVKACQEVGFQTTFIQEASHVQESTLLYLIHKLNEDTSIHGIIIQLPLPKHINAIKIIQAITPSKDVDGLHTFNYGRMACNLPTHIPATPLGILLLLEHYQIETAGKHCVIIGRGPTVGAPLSILMSRNAYPGNATVTLCHSYTQQLTNFTRQADILVVAVGKPGLITADMIKPSTTVIDVGITRIPDTTKKRGYRLKGDVAFEEVATLCNAITPVPGGVGPMTIAALLTNTLRAATNQVYNTPTS.

NADP(+) is bound by residues 165 to 167 (GRG), Ser-194, and Ile-235.

This sequence belongs to the tetrahydrofolate dehydrogenase/cyclohydrolase family. Homodimer.

It catalyses the reaction (6R)-5,10-methylene-5,6,7,8-tetrahydrofolate + NADP(+) = (6R)-5,10-methenyltetrahydrofolate + NADPH. It carries out the reaction (6R)-5,10-methenyltetrahydrofolate + H2O = (6R)-10-formyltetrahydrofolate + H(+). It participates in one-carbon metabolism; tetrahydrofolate interconversion. Catalyzes the oxidation of 5,10-methylenetetrahydrofolate to 5,10-methenyltetrahydrofolate and then the hydrolysis of 5,10-methenyltetrahydrofolate to 10-formyltetrahydrofolate. This Amoebophilus asiaticus (strain 5a2) protein is Bifunctional protein FolD.